A 635-amino-acid chain; its full sequence is Threonine--tRNA ligase (635 aa).

The 61-residue stretch at 1–61 folds into the TGS domain; it reads MINISLSDGS…ENNCKLRILT (61 aa). Residues 242–533 form a catalytic region; the sequence is DHRKLGRELD…LIEEYAGCFP (292 aa). Residues Cys-333, His-384, and His-510 each coordinate Zn(2+).

Belongs to the class-II aminoacyl-tRNA synthetase family. In terms of assembly, homodimer. Requires Zn(2+) as cofactor.

It localises to the cytoplasm. The enzyme catalyses tRNA(Thr) + L-threonine + ATP = L-threonyl-tRNA(Thr) + AMP + diphosphate + H(+). Catalyzes the attachment of threonine to tRNA(Thr) in a two-step reaction: L-threonine is first activated by ATP to form Thr-AMP and then transferred to the acceptor end of tRNA(Thr). Also edits incorrectly charged L-seryl-tRNA(Thr). This chain is Threonine--tRNA ligase, found in Rickettsia canadensis (strain McKiel).